A 986-amino-acid chain; its full sequence is Leucine-rich repeat receptor-like kinase protein HAR1 (986 aa).

An N-terminal signal peptide occupies residues 1–25 (MRIRVSYLLVLCFTLIWFRWTVVYS). 21 LRR repeats span residues 71–97 (DQNLRVVALNVTLVPLFGHLPPEIGLL), 98–121 (EKLENLTISMNNLTDQLPSDLASL), 123–145 (SLKVLNISHNLFSGQFPGNITVG), 146–170 (MTELEALDAYDNSFSGPLPEEIVKL), 171–196 (EKLKYLHLAGNYFSGTIPESYSEFQS), 198–218 (EFLGLNANSLTGRVPESLAKL), 243–267 (MENLRLLEMANCNLTGEIPPSLGNL), 268–291 (TKLHSLFVQMNNLTGTIPPELSSM), 293–314 (SLMSLDLSINDLTGEIPESFSK), 316–339 (KNLTLMNFFQNKFRGSLPSFIGDL), 340–363 (PNLETLQVWENNFSFVLPHNLGGN), 365–387 (RFLYFDVTKNHLTGLIPPDLCKS), 388–411 (GRLKTFIITDNFFRGPIPKGIGEC), 412–435 (RSLTKIRVANNFLDGPVPPGVFQL), 437–458 (SVTITELSNNRLNGELPSVISG), 459–482 (ESLGTLTLSNNLFTGKIPAAMKNL), 483–506 (RALQSLSLDANEFIGEIPGGVFEI), 508–530 (MLTKVNISGNNLTGPIPTTITHR), 531–554 (ASLTAVDLSRNNLAGEVPKGMKNL), 555–578 (MDLSILNLSRNEISGPVPDEIRFM), and 579–603 (TSLTTLDLSSNNFTGTVPTGGQFLV). N-linked (GlcNAc...) asparagine glycans are attached at residues N80, N102, N109, N128, and N141. N-linked (GlcNAc...) asparagine glycans are attached at residues N255, N266, and N279. Residues N317 and N351 are each glycosylated (N-linked (GlcNAc...) asparagine). N513 and N518 each carry an N-linked (GlcNAc...) asparagine glycan. 2 N-linked (GlcNAc...) asparagine glycosylation sites follow: N561 and N590. The helical transmembrane segment at 645–665 (IVIGIALATAVLLVAVTVHVV) threads the bilayer. The Protein kinase domain occupies 695–971 (LKEENIIGKG…TMREVVHMLT (277 aa)). ATP-binding positions include 701 to 709 (IGKGGAGIV) and K723. Residue D820 is the Proton acceptor of the active site.

It belongs to the protein kinase superfamily. Ser/Thr protein kinase family. Expressed in roots, leaves, stems and flowers.

It is found in the cell membrane. It catalyses the reaction L-seryl-[protein] + ATP = O-phospho-L-seryl-[protein] + ADP + H(+). It carries out the reaction L-threonyl-[protein] + ATP = O-phospho-L-threonyl-[protein] + ADP + H(+). Functionally, LRR receptor kinase involved in the regulation of root and shoot growth, and root nodule organogenesis. Involved in long distance nodulation signaling events. Involved in the autoregulation of nodulation (AON), a long distance systemic signaling from root to shoot and back again, which allows legumes to limit the number of root nodules formed based on available nitrogen and previous rhizobial colonization. Acts from shoot to root to control AON. Involved in the regulation of root colonization by arbuscular mycorrhizal (AM) fungi. This chain is Leucine-rich repeat receptor-like kinase protein HAR1, found in Lotus japonicus (Lotus corniculatus var. japonicus).